The sequence spans 361 residues: Chorismate synthase (361 aa).

Arg48 and Arg54 together coordinate NADP(+). FMN contacts are provided by residues 125 to 127 (RSS), 238 to 239 (NA), Gly278, 293 to 297 (KPTSS), and Arg319.

This sequence belongs to the chorismate synthase family. Homotetramer. Requires FMNH2 as cofactor.

It carries out the reaction 5-O-(1-carboxyvinyl)-3-phosphoshikimate = chorismate + phosphate. Its pathway is metabolic intermediate biosynthesis; chorismate biosynthesis; chorismate from D-erythrose 4-phosphate and phosphoenolpyruvate: step 7/7. Functionally, catalyzes the anti-1,4-elimination of the C-3 phosphate and the C-6 proR hydrogen from 5-enolpyruvylshikimate-3-phosphate (EPSP) to yield chorismate, which is the branch point compound that serves as the starting substrate for the three terminal pathways of aromatic amino acid biosynthesis. This reaction introduces a second double bond into the aromatic ring system. This Salmonella choleraesuis (strain SC-B67) protein is Chorismate synthase.